A 27-amino-acid polypeptide reads, in one-letter code: DELTA-pseudomyrmecitoxin-Pp1a subunit A (27 aa).

As to quaternary structure, heterodimer composed of subunit A and subunit B (DELTA-PSDTX-Pp1a); disulfide-linked. As to expression, expressed by the venom gland.

The protein localises to the secreted. In terms of biological role, this heterodimer has insecticidal and cytotoxic properties. Induces immediate paralysis when injected into blowflies (Lucilia cuprina), and then death within 24 hours. Also inhibits the growth of Aedes albopictus mosquito C6/36 cells. The sequence is that of DELTA-pseudomyrmecitoxin-Pp1a subunit A from Pseudomyrmex penetrator (Ant).